The chain runs to 660 residues: Arginine--tRNA ligase, cytoplasmic (660 aa).

Methionine 1 is modified (N-acetylmethionine). The interval 1-72 is could be involved in the assembly of the multisynthetase complex; it reads MDALVAHCSA…QAERNKPTKT (72 aa). Residues 200 to 202, histidine 211, tyrosine 384, aspartate 388, and glutamine 412 contribute to the L-arginine site; that span reads SPN. Residues 201 to 212 carry the 'HIGH' region motif; that stretch reads PNIAKEMHVGHL. Residues 529–543 form an interaction with tRNA region; that stretch reads NTAAYLLYAFTRIRS.

It belongs to the class-I aminoacyl-tRNA synthetase family. Interacts (via N-terminus) with AIMP1 (via N-terminus); this stimulates its catalytic activity. Interacts (via N-terminus) with LARS2 (via C-terminus). Monomer. Part of a multisubunit complex that groups tRNA ligases for Arg (RARS1), Asp (DARS1), Gln (QARS1), Ile (IARS1), Leu (LARS1), Lys (KARS1), Met (MARS1) the bifunctional ligase for Glu and Pro (EPRS1) and the auxiliary subunits AIMP1/p43, AIMP2/p38 and EEF1E1/p18. Interacts with QARS1. Part of a complex composed of RARS1, QARS1 and AIMP1.

The protein localises to the cytoplasm. The protein resides in the cytosol. It catalyses the reaction tRNA(Arg) + L-arginine + ATP = L-arginyl-tRNA(Arg) + AMP + diphosphate. Its function is as follows. Forms part of a macromolecular complex that catalyzes the attachment of specific amino acids to cognate tRNAs during protein synthesis. Modulates the secretion of AIMP1 and may be involved in generation of the inflammatory cytokine EMAP2 from AIMP1. In Bos taurus (Bovine), this protein is Arginine--tRNA ligase, cytoplasmic (RARS1).